Reading from the N-terminus, the 528-residue chain is Phosphoenolpyruvate carboxykinase (ATP) (528 aa).

Substrate is bound by residues arginine 56, tyrosine 192, and lysine 198. ATP-binding positions include lysine 198, histidine 217, and 233–241 (GLSGTGKTT). The Mn(2+) site is built by lysine 198 and histidine 217. Aspartate 254 contributes to the Mn(2+) binding site. Residues glutamate 282, arginine 319, and threonine 444 each contribute to the ATP site. Arginine 319 serves as a coordination point for substrate.

The protein belongs to the phosphoenolpyruvate carboxykinase (ATP) family. It depends on Mn(2+) as a cofactor.

It is found in the cytoplasm. It catalyses the reaction oxaloacetate + ATP = phosphoenolpyruvate + ADP + CO2. It functions in the pathway carbohydrate biosynthesis; gluconeogenesis. Involved in the gluconeogenesis. Catalyzes the conversion of oxaloacetate (OAA) to phosphoenolpyruvate (PEP) through direct phosphoryl transfer between the nucleoside triphosphate and OAA. In Bacillus cereus (strain AH187), this protein is Phosphoenolpyruvate carboxykinase (ATP).